The following is a 91-amino-acid chain: DNA-directed RNA polymerase subunit omega (91 aa).

The protein belongs to the RNA polymerase subunit omega family. As to quaternary structure, the RNAP catalytic core consists of 2 alpha, 1 beta, 1 beta' and 1 omega subunit. When a sigma factor is associated with the core the holoenzyme is formed, which can initiate transcription.

The enzyme catalyses RNA(n) + a ribonucleoside 5'-triphosphate = RNA(n+1) + diphosphate. In terms of biological role, promotes RNA polymerase assembly. Latches the N- and C-terminal regions of the beta' subunit thereby facilitating its interaction with the beta and alpha subunits. This chain is DNA-directed RNA polymerase subunit omega, found in Nocardia farcinica (strain IFM 10152).